The sequence spans 1006 residues: Transcription factor tau subunit sfc4 (1006 aa).

A disordered region spans residues 64-91 (GLWSDEESDYEGSDDESNFSKTASRTED). Over residues 66–80 (WSDEESDYEGSDDES) the composition is skewed to acidic residues. 6 TPR repeats span residues 133 to 166 (QQML…DNNV), 205 to 238 (HELW…KPPN), 277 to 310 (ASIL…FYQY), 396 to 429 (HLFR…PPDY), 431 to 464 (WGML…EPAQ), and 466 to 499 (IGLW…DNSN). Positions 506-554 (LAEINELQDNRDAALEIVTNIFEQRRNINELEREQSQNEDHEKNVGSQL) form a coiled coil. TPR repeat units lie at residues 841-874 (PVLV…NPDC) and 924-957 (QEAL…SPMS).

As to quaternary structure, component of the TFIIIC complex including sfc1, sfc3, sfc4, sfc6 and sfc7. The subunits are organized in two globular domains, tauA and tauB, connected by a proteolysis-sensitive and flexible linker. Interacts with sfc1, sfc3 and sfc6. Phosphorylated.

It is found in the nucleus. Functionally, TFIIIC mediates tRNA and 5S RNA gene activation by binding to intragenic promoter elements. Upstream of the transcription start site, TFIIIC assembles the initiation complex TFIIIB-TFIIIC-tDNA, which is sufficient for RNA polymerase III recruitment and function. Part of the tauA domain of TFIIIC that binds boxA DNA promoter sites of tRNA and similar genes. Sfc4 is the TFIIIB assembling subunit of TFIIIC. This Schizosaccharomyces pombe (strain 972 / ATCC 24843) (Fission yeast) protein is Transcription factor tau subunit sfc4.